Reading from the N-terminus, the 284-residue chain is Tropomyosin alpha-3 chain (284 aa).

At methionine 1 the chain carries N-acetylmethionine. The segment at 1–43 is disordered; that stretch reads MEAIKKKMQMLKLDKENALDRAEQAEAEQKQAEERSKQLEDEL. Positions 1-284 form a coiled coil; that stretch reads MEAIKKKMQM…DHALNDMTSI (284 aa). Position 2 is an N-acetylalanine (glutamate 2). A compositionally biased stretch (basic and acidic residues) spans 12–40; that stretch reads KLDKENALDRAEQAEAEQKQAEERSKQLE. Threonine 53 is subject to Phosphothreonine. 2 positions are modified to phosphoserine: serine 61 and serine 87. At threonine 108 the chain carries Phosphothreonine. Phosphoserine occurs at positions 206 and 215. Position 228 is an N6-acetyllysine (leucine 228). A Phosphothreonine modification is found at threonine 252. At tyrosine 261 the chain carries Phosphotyrosine. Serine 271 is modified (phosphoserine). Threonine 282 is subject to Phosphothreonine. Serine 283 is modified (phosphoserine).

The protein belongs to the tropomyosin family. As to quaternary structure, homodimer. Heterodimer of an alpha (TPM1, TPM3 or TPM4) and a beta (TPM2) chain. Interacts with TMOD1. Interacts with TNNT1.

The protein resides in the cytoplasm. The protein localises to the cytoskeleton. Its function is as follows. Binds to actin filaments in muscle and non-muscle cells. Plays a central role, in association with the troponin complex, in the calcium dependent regulation of vertebrate striated muscle contraction. Smooth muscle contraction is regulated by interaction with caldesmon. In non-muscle cells is implicated in stabilizing cytoskeleton actin filaments. The polypeptide is Tropomyosin alpha-3 chain (TPM3) (Bos taurus (Bovine)).